Reading from the N-terminus, the 644-residue chain is (E2-independent) E3 ubiquitin-conjugating enzyme FATS (644 aa).

The tract at residues methionine 1–glutamine 67 is required for interaction with p53/TP53. Disordered regions lie at residues threonine 62–glycine 83, leucine 305–threonine 349, valine 367–serine 413, and asparagine 475–tyrosine 507. Positions glutamine 67–valine 175 are required for interaction with HDAC1. Residues glutamate 398–serine 410 show a composition bias toward low complexity. Residues threonine 481–serine 492 show a composition bias toward pro residues. Residues threonine 516–valine 644 form an ALMS motif region. Residues lysine 598–valine 629 are a coiled coil.

Interacts with HDAC1; the interaction prevents binding of HDAC1 to CDKN1A/p21 and facilitates the acetylation and stabilization of CDKN1A/p21. Interacts with p53/TP53; the interaction inhibits binding of p53/TP53 and MDM2. As to expression, highly expressed in testis. Weak expression found in brain, lung, heart, ovary, thymus, spleen and kidney.

It is found in the cytoplasm. The protein localises to the cytoskeleton. The protein resides in the microtubule organizing center. It localises to the centrosome. In terms of biological role, tumor suppressor that is required to sustain G2/M checkpoint after DNA damage. Acts as a p53/TP53 activator by inhibiting MDM2 binding to p53/TP53 and stimulating non-proteolytic polyubiquitination of p53/TP53. Exhibits ubiquitin ligase (E3) activity and assemble ubiquitin polymers through 'Lys-11'- (K11-), 'Lys-29'- (K29-) and 'Lys-63'- (K63)-linkages, independently of the ubiquitin-conjugating enzyme (E2). Promotes p53/TP53-dependent transcription of CDKN1A/p21, leading to robust checkpoint response. Mediates CDKN1A/p21 protein stability in a ubiquitin-independent manner. Interacts with HDAC1 and prevents binding of HDAC1 to CDKN1A/p21 and facilitates the acetylation and stabilization of CDKN1A/p21. May have a role in the assembly of primary cilia. This chain is (E2-independent) E3 ubiquitin-conjugating enzyme FATS, found in Mus musculus (Mouse).